Consider the following 429-residue polypeptide: Adenylosuccinate synthetase (429 aa).

GTP is bound by residues 12–18 (GDEGKGK) and 40–42 (GHT). The Proton acceptor role is filled by aspartate 13. Mg(2+) contacts are provided by aspartate 13 and glycine 40. Residues 13–16 (DEGK), 38–41 (NAGH), threonine 129, arginine 143, glutamine 223, threonine 238, and arginine 302 contribute to the IMP site. Residue histidine 41 is the Proton donor of the active site. 298–304 (VVTGRKR) provides a ligand contact to substrate. GTP is bound by residues arginine 304, 330 to 332 (KLD), and 412 to 414 (STS).

It belongs to the adenylosuccinate synthetase family. As to quaternary structure, homodimer. Mg(2+) is required as a cofactor.

The protein localises to the cytoplasm. It catalyses the reaction IMP + L-aspartate + GTP = N(6)-(1,2-dicarboxyethyl)-AMP + GDP + phosphate + 2 H(+). The protein operates within purine metabolism; AMP biosynthesis via de novo pathway; AMP from IMP: step 1/2. Functionally, plays an important role in the de novo pathway of purine nucleotide biosynthesis. Catalyzes the first committed step in the biosynthesis of AMP from IMP. The polypeptide is Adenylosuccinate synthetase (Bartonella henselae (strain ATCC 49882 / DSM 28221 / CCUG 30454 / Houston 1) (Rochalimaea henselae)).